Consider the following 460-residue polypeptide: MLSSKVVGDSHGQDSSYFLGWQEYEKNPFHESFNTSGIVQMGLAENQLSFDLIEKWLEEHPEVLGLKKNDESVFRQLALFQDYHGLPAFKDAMAKFMGKIRENKVKFDTNKMVLTAGSTSANETLMFCLANPGDAFLIPAPYYPGFDRDLKWRTGVEIVPIHCVSSNGYKITEDALEDAYERALKHNLNVKGVLITNPSNPLGTSTTREELDLLLTFTSTKKIHMVSDEIYSGTVFDSPEFTSVLEVAKDKNMGLDGKIHVVYSLSKDLGLPGFRVGLIYSNNEKVVSAATKMSSFGLISSQTQHLLANLLSDERFTTNYLEENKKRLRERKDRLVSGLKEAGISCLKSNAGLFCWVDLRHLLKSNTFEAEHSLWTKIVCEVGLNISPGSSCHCDEPGWFRVCFANMSDQTMEVAMDRVKGFVDNNNGGKQKRTMWDTRRRSLINKWVSKLSSVTCESER.

Substrate is bound by residues E45 and Y83. K267 carries the N6-(pyridoxal phosphate)lysine modification.

It belongs to the class-I pyridoxal-phosphate-dependent aminotransferase family. In terms of assembly, homodimer and heterodimer. In vivo, the relevance of heterodimerization with other ACS enzymes is however unsure. Interacts with GRF3. Requires pyridoxal 5'-phosphate as cofactor. May be processed at its C-terminus. Expressed in roots.

The catalysed reaction is S-adenosyl-L-methionine = 1-aminocyclopropane-1-carboxylate + S-methyl-5'-thioadenosine + H(+). Its pathway is alkene biosynthesis; ethylene biosynthesis via S-adenosyl-L-methionine; ethylene from S-adenosyl-L-methionine: step 1/2. Functionally, 1-aminocyclopropane-1-carboxylate synthase (ACS) enzymes catalyze the conversion of S-adenosyl-L-methionine (SAM) into 1-aminocyclopropane-1-carboxylate (ACC), a direct precursor of ethylene. This is 1-aminocyclopropane-1-carboxylate synthase 11 (ACS11) from Arabidopsis thaliana (Mouse-ear cress).